Consider the following 104-residue polypeptide: uncharacterized protein (104 aa).

Disordered regions lie at residues 1–48 and 66–104; these read MLRR…NNQP and QENTSSNNNNNNNHGDDENGSRYGHGSSLGGDVHSRRCS.

This is an uncharacterized protein from Saccharomyces cerevisiae (strain ATCC 204508 / S288c) (Baker's yeast).